The primary structure comprises 186 residues: ATP synthase subunit delta (186 aa).

The protein belongs to the ATPase delta chain family. F-type ATPases have 2 components, F(1) - the catalytic core - and F(0) - the membrane proton channel. F(1) has five subunits: alpha(3), beta(3), gamma(1), delta(1), epsilon(1). F(0) has three main subunits: a(1), b(2) and c(10-14). The alpha and beta chains form an alternating ring which encloses part of the gamma chain. F(1) is attached to F(0) by a central stalk formed by the gamma and epsilon chains, while a peripheral stalk is formed by the delta and b chains.

It localises to the cellular chromatophore membrane. Functionally, f(1)F(0) ATP synthase produces ATP from ADP in the presence of a proton or sodium gradient. F-type ATPases consist of two structural domains, F(1) containing the extramembraneous catalytic core and F(0) containing the membrane proton channel, linked together by a central stalk and a peripheral stalk. During catalysis, ATP synthesis in the catalytic domain of F(1) is coupled via a rotary mechanism of the central stalk subunits to proton translocation. In terms of biological role, this protein is part of the stalk that links CF(0) to CF(1). It either transmits conformational changes from CF(0) to CF(1) or is implicated in proton conduction. This chain is ATP synthase subunit delta, found in Rhodobacter capsulatus (Rhodopseudomonas capsulata).